Here is a 163-residue protein sequence, read N- to C-terminus: Cyanate hydratase (163 aa).

Catalysis depends on residues Arg103, Glu106, and Ser129.

It belongs to the cyanase family.

It catalyses the reaction cyanate + hydrogencarbonate + 3 H(+) = NH4(+) + 2 CO2. Functionally, catalyzes the reaction of cyanate with bicarbonate to produce ammonia and carbon dioxide. The sequence is that of Cyanate hydratase from Ajellomyces dermatitidis (strain ER-3 / ATCC MYA-2586) (Blastomyces dermatitidis).